The primary structure comprises 194 residues: Adenylate kinase isoenzyme 1 (194 aa).

Methionine 1 carries the post-translational modification N-acetylmethionine. 18 to 23 is a binding site for ATP; sequence GSGKGT. Serine 38 carries the post-translational modification Phosphoserine. Positions 38–67 are NMP; the sequence is STGDLLRAEVSSGSARGKMLSEIMEKGQLV. AMP contacts are provided by residues threonine 39, arginine 44, 65–67, 94–97, and glutamine 101; these read QLV and GYPR. Residues 131-141 are LID; that stretch reads KRGETSGRVDD. Position 132 (arginine 132) interacts with ATP. 2 residues coordinate AMP: arginine 138 and arginine 149. Residue glycine 177 participates in ATP binding.

The protein belongs to the adenylate kinase family. AK1 subfamily. As to quaternary structure, monomer. Mg(2+) serves as cofactor.

It is found in the cytoplasm. The enzyme catalyses a ribonucleoside 5'-phosphate + ATP = a ribonucleoside 5'-diphosphate + ADP. The catalysed reaction is AMP + ATP = 2 ADP. It carries out the reaction dAMP + ATP = dADP + ADP. It catalyses the reaction dATP + AMP = dADP + ADP. The enzyme catalyses dAMP + dATP = 2 dADP. The catalysed reaction is a 2'-deoxyribonucleoside 5'-diphosphate + ATP = a 2'-deoxyribonucleoside 5'-triphosphate + ADP. It carries out the reaction a ribonucleoside 5'-diphosphate + ATP = a ribonucleoside 5'-triphosphate + ADP. It catalyses the reaction CDP + GTP = CTP + GDP. The enzyme catalyses GDP + ATP = GTP + ADP. The catalysed reaction is UDP + ATP = UTP + ADP. It carries out the reaction GTP + UDP = UTP + GDP. It catalyses the reaction dTDP + GTP = dTTP + GDP. The enzyme catalyses dCDP + GTP = dCTP + GDP. The catalysed reaction is dGDP + ATP = dGTP + ADP. It carries out the reaction dADP + GTP = dATP + GDP. It catalyses the reaction thiamine diphosphate + ADP = thiamine triphosphate + AMP. Its function is as follows. Catalyzes the reversible transfer of the terminal phosphate group between ATP and AMP. Also displays broad nucleoside diphosphate kinase activity. Plays an important role in cellular energy homeostasis and in adenine nucleotide metabolism. Also catalyzes at a very low rate the synthesis of thiamine triphosphate (ThTP) from thiamine diphosphate (ThDP) and ADP. In Sus scrofa (Pig), this protein is Adenylate kinase isoenzyme 1.